Reading from the N-terminus, the 129-residue chain is Transcriptional regulator WhiB2 (129 aa).

The segment at 23-45 (SHAPHIDTGSTPTGAAGRPQLSL) is disordered. The region spanning 66–123 (LCAQTDPEAFFPEKGGSTREAKRICQGCEVRDACLEYALAHDERFGIWGGLSERERRR) is the 4Fe-4S Wbl-type domain. Positions 67, 90, 93, and 99 each coordinate [4Fe-4S] cluster.

It belongs to the WhiB family. It depends on [4Fe-4S] cluster as a cofactor. The Fe-S cluster can be nitrosylated by nitric oxide (NO). In terms of processing, upon Fe-S cluster removal intramolecular disulfide bonds are formed.

The protein localises to the cytoplasm. Its function is as follows. Acts as a transcriptional regulator. Probably redox-responsive. The apo- but not holo-form probably binds DNA. This Mycolicibacterium smegmatis (strain ATCC 700084 / mc(2)155) (Mycobacterium smegmatis) protein is Transcriptional regulator WhiB2 (whiB2).